Consider the following 391-residue polypeptide: Anhydro-N-acetylmuramic acid kinase (391 aa).

9-16 (GTSVDGID) contributes to the ATP binding site.

The protein belongs to the anhydro-N-acetylmuramic acid kinase family.

It catalyses the reaction 1,6-anhydro-N-acetyl-beta-muramate + ATP + H2O = N-acetyl-D-muramate 6-phosphate + ADP + H(+). It participates in amino-sugar metabolism; 1,6-anhydro-N-acetylmuramate degradation. The protein operates within cell wall biogenesis; peptidoglycan recycling. Functionally, catalyzes the specific phosphorylation of 1,6-anhydro-N-acetylmuramic acid (anhMurNAc) with the simultaneous cleavage of the 1,6-anhydro ring, generating MurNAc-6-P. Is required for the utilization of anhMurNAc either imported from the medium or derived from its own cell wall murein, and thus plays a role in cell wall recycling. The protein is Anhydro-N-acetylmuramic acid kinase of Gloeothece citriformis (strain PCC 7424) (Cyanothece sp. (strain PCC 7424)).